The sequence spans 257 residues: Beta-fibrinogenase mucrofibrase-3 (257 aa).

The N-terminal stretch at 1-18 (MVLIRVLANLLILQLSYA) is a signal peptide. The propeptide occupies 19-24 (QKSSEL). The 224-residue stretch at 25–248 (VIGGDECNIN…HLDWIKGIIA (224 aa)) folds into the Peptidase S1 domain. Cystine bridges form between C31/C162, C49/C65, C97/C255, C141/C209, C173/C188, and C199/C224. Active-site charge relay system residues include H64 and D109. S203 serves as the catalytic Charge relay system.

The protein belongs to the peptidase S1 family. Snake venom subfamily. As to quaternary structure, monomer. Expressed by the venom gland.

The protein resides in the secreted. Its function is as follows. Snake venom serine protease with fibrinogenolytic activities. Cleaves beta-chain of fibrinogen (FGB) efficiently and shows relatively lower activity on alpha-chain. The sequence is that of Beta-fibrinogenase mucrofibrase-3 from Protobothrops mucrosquamatus (Taiwan habu).